Reading from the N-terminus, the 514-residue chain is MVAEEARKEAMAKSVSGGKITYFVVASCVMAAMGGVIFGYDIGVSGGVMSMGPFLKRFFPKVYKLQEEDRRRRGNSNNHYCLFNSQLLTSFTSSLYVSGLIATLLASSVTRSWGRKPSIFLGGVSFLAGAALGGSAQNVAMLIIARLLLGVGVGFANQSVPLYLSEMAPAKYRGAISNGFQLCIGIGFLSANVINYETQNIKHGWRISLATAAIPASILTLGSLFLPETPNSIIQTTGDVHKTELMLRRVRGTNDVQDELTDLVEASSGSDTDSNAFLKLLQRKYRPELVMALVIPFFQQVTGINVVAFYAPVLYRTVGFGESGSLMSTLVTGIVGTSSTLLSMLVVDRIGRKTLFLIGGLQMLVSQVTIGVIVMVADVHDGVIKEGYGYAVVVLVCVYVAGFGWSWGPLGWLVPSEIFPLEIRSVAQSVTVAVSFVFTFAVAQSAPPMLCKFRAGIFFFYGGWLVVMTVAVQLFLPETKNVPIEKVVGLWEKHWFWRRMTSKRDIQETTILSH.

Topologically, residues 1-19 are cytoplasmic; sequence MVAEEARKEAMAKSVSGGK. Helical transmembrane passes span 20–40, 87–107, 124–144, 147–167, 174–194, 207–227, 289–309, 327–347, 356–376, 392–412, 430–450, and 456–476; these read ITYF…IFGY, LLTS…LLAS, VSFL…MLII, LLLG…LSEM, GAIS…ANVI, ISLA…LFLP, LVMA…VVAF, MSTL…MLVV, FLIG…IVMV, VVVL…PLGW, VTVA…PPML, and GIFF…QLFL. Residues 477-514 are Cytoplasmic-facing; that stretch reads PETKNVPIEKVVGLWEKHWFWRRMTSKRDIQETTILSH.

This sequence belongs to the major facilitator superfamily. Sugar transporter (TC 2.A.1.1) family.

The protein resides in the membrane. Mediates an active uptake of hexoses, probably by sugar/hydrogen symport. This Arabidopsis thaliana (Mouse-ear cress) protein is Sugar transport protein 3 (STP3).